The following is a 194-amino-acid chain: Cytochrome c biogenesis ATP-binding export protein CcmA (194 aa).

Residues 5-194 (LALDGVACIR…LDELVMGVLA (190 aa)) form the ABC transporter domain. Position 37-44 (37-44 (GPNGAGKS)) interacts with ATP.

This sequence belongs to the ABC transporter superfamily. CcmA exporter (TC 3.A.1.107) family. The complex is composed of two ATP-binding proteins (CcmA) and two transmembrane proteins (CcmB).

The protein resides in the cell inner membrane. It catalyses the reaction heme b(in) + ATP + H2O = heme b(out) + ADP + phosphate + H(+). Its function is as follows. Part of the ABC transporter complex CcmAB involved in the biogenesis of c-type cytochromes; once thought to export heme, this seems not to be the case, but its exact role is uncertain. Responsible for energy coupling to the transport system. The sequence is that of Cytochrome c biogenesis ATP-binding export protein CcmA from Sphingopyxis alaskensis (strain DSM 13593 / LMG 18877 / RB2256) (Sphingomonas alaskensis).